A 48-amino-acid polypeptide reads, in one-letter code: Cytochrome b559 subunit beta (48 aa).

The chain crosses the membrane as a helical span at residues 23 to 39; that stretch reads WLAVHALAIPSVFFLGS. His-27 is a binding site for heme.

Belongs to the PsbE/PsbF family. Heterodimer of an alpha subunit and a beta subunit. PSII is composed of 1 copy each of membrane proteins PsbA, PsbB, PsbC, PsbD, PsbE, PsbF, PsbH, PsbI, PsbJ, PsbK, PsbL, PsbM, PsbT, PsbX, PsbY, Psb30/Ycf12, peripheral proteins PsbO, CyanoQ (PsbQ), PsbU, PsbV and a large number of cofactors. It forms dimeric complexes. The cofactor is heme b.

It is found in the cellular thylakoid membrane. This b-type cytochrome is tightly associated with the reaction center of photosystem II (PSII). PSII is a light-driven water:plastoquinone oxidoreductase that uses light energy to abstract electrons from H(2)O, generating O(2) and a proton gradient subsequently used for ATP formation. It consists of a core antenna complex that captures photons, and an electron transfer chain that converts photonic excitation into a charge separation. The sequence is that of Cytochrome b559 subunit beta from Prochlorococcus marinus (strain MIT 9301).